A 319-amino-acid polypeptide reads, in one-letter code: 7,8-didemethyl-8-hydroxy-5-deazariboflavin synthase (319 aa).

Positions 6-236 (VTYSPAFTLV…AEITIQIPPN (231 aa)) constitute a Radical SAM core domain. 3 residues coordinate [4Fe-4S] cluster: Cys20, Cys24, and Cys27.

It belongs to the radical SAM superfamily. CofG family. Consists of two subunits, CofG and CofH. The cofactor is [4Fe-4S] cluster.

It catalyses the reaction 5-amino-5-(4-hydroxybenzyl)-6-(D-ribitylimino)-5,6-dihydrouracil + S-adenosyl-L-methionine = 7,8-didemethyl-8-hydroxy-5-deazariboflavin + 5'-deoxyadenosine + L-methionine + NH4(+) + H(+). It participates in cofactor biosynthesis; coenzyme F0 biosynthesis. Functionally, catalyzes the radical-mediated synthesis of 7,8-didemethyl-8-hydroxy-5-deazariboflavin from 5-amino-5-(4-hydroxybenzyl)-6-(D-ribitylimino)-5,6-dihydrouracil. The chain is 7,8-didemethyl-8-hydroxy-5-deazariboflavin synthase from Gloeobacter violaceus (strain ATCC 29082 / PCC 7421).